The following is a 465-amino-acid chain: Lactaldehyde dehydrogenase (465 aa).

An NAD(+)-binding site is contributed by 220 to 225 (GSVEVG). Residues E240 and C274 contribute to the active site.

The protein belongs to the aldehyde dehydrogenase family. As to quaternary structure, homotetramer.

The enzyme catalyses (S)-lactaldehyde + NAD(+) + H2O = (S)-lactate + NADH + 2 H(+). Its pathway is cofactor biosynthesis; coenzyme F420 biosynthesis. In terms of biological role, involved in F420 biosynthesis through the oxidation of lactaldehyde to lactate. This is Lactaldehyde dehydrogenase from Methanococcus aeolicus (strain ATCC BAA-1280 / DSM 17508 / OCM 812 / Nankai-3).